A 255-amino-acid chain; its full sequence is Small ribosomal subunit protein eS1A (255 aa).

Residues 1–18 (MAVGKNKRLSKGKKGQKK) show a composition bias toward basic residues. The segment at 1–20 (MAVGKNKRLSKGKKGQKKRV) is disordered. A2 is modified (N-acetylalanine; partial). T245 is subject to Phosphothreonine. A Glycyl lysine isopeptide (Lys-Gly) (interchain with G-Cter in ubiquitin) cross-link involves residue K248. A Phosphothreonine modification is found at T254.

The protein belongs to the eukaryotic ribosomal protein eS1 family. As to quaternary structure, component of the small ribosomal subunit. Mature ribosomes consist of a small (40S) and a large (60S) subunit. The 40S subunit contains about 33 different proteins and 1 molecule of RNA (18S). The 60S subunit contains about 49 different proteins and 3 molecules of RNA (25S, 5.8S and 5S).

It is found in the cytoplasm. This is Small ribosomal subunit protein eS1A from Saccharomyces cerevisiae (strain RM11-1a) (Baker's yeast).